The chain runs to 513 residues: Alpha-1B-glycoprotein (513 aa).

Residues 1–20 form the signal peptide; that stretch reads MSLLTTVLLLWGFTLGPGNA. Ig-like V-type domains lie at 22–126, 127–219, 220–312, 313–415, and 416–513; these read WLDS…VTGK, EPLP…MSAT, QLPP…PVEL, MWSD…LRIN, and GPAP…VEGS. 3 N-linked (GlcNAc...) asparagine glycosylation sites follow: N44, N89, and N192. Cystine bridges form between C49-C96, C153-C195, C245-C292, C343-C392, and C441-C488. Residues N369, N381, N389, and N485 are each glycosylated (N-linked (GlcNAc...) asparagine).

In terms of assembly, interacts with CRISP3. Isoform 1 is expressed in normal liver. Isoform 2 is expressed in the regenerating liver after partial hepatectomy and at very low levels in the normal lung, brain and testis.

The protein localises to the secreted. The sequence is that of Alpha-1B-glycoprotein from Rattus norvegicus (Rat).